Reading from the N-terminus, the 357-residue chain is Sorbitol dehydrogenase 1 (357 aa).

Cys-43 is a Zn(2+) binding site. A substrate-binding site is contributed by Tyr-49. The Zn(2+) site is built by His-68 and Glu-69. Glu-154 serves as a coordination point for substrate. Residues Asp-202, Lys-207, 275-277 (VGM), and 299-301 (CFR) contribute to the NAD(+) site. The substrate site is built by Arg-301 and Tyr-302.

It belongs to the zinc-containing alcohol dehydrogenase family. As to quaternary structure, homotetramer. Zn(2+) serves as cofactor.

The enzyme catalyses keto-D-fructose + NADH + H(+) = D-sorbitol + NAD(+). It carries out the reaction xylitol + NAD(+) = D-xylulose + NADH + H(+). Functionally, polyol dehydrogenase that catalyzes the reversible NAD(+)-dependent oxidation of various sugar alcohols. Is active with D-sorbitol (D-glucitol) and xylitol as substrates, leading to the C2-oxidized product D-fructose and D-xylulose, respectively. Is likely involved in the utilization of D-sorbitol as a sole carbon source for growth. Has no activity on mannitol and primary alcohols such as ethanol. In Saccharomyces cerevisiae (strain ATCC 204508 / S288c) (Baker's yeast), this protein is Sorbitol dehydrogenase 1 (SOR1).